We begin with the raw amino-acid sequence, 366 residues long: 1-aminocyclopropane-1-carboxylate oxidase homolog 12 (366 aa).

Positions 215-314 (KTLLMICHYY…RISVASFFSS (100 aa)) constitute a Fe2OG dioxygenase domain. Residues His239, Asp241, and His295 each coordinate Fe cation. Arg305 is a 2-oxoglutarate binding site.

It belongs to the iron/ascorbate-dependent oxidoreductase family. Fe(2+) is required as a cofactor.

In Arabidopsis thaliana (Mouse-ear cress), this protein is 1-aminocyclopropane-1-carboxylate oxidase homolog 12.